The chain runs to 506 residues: Kynurenine 3-monooxygenase (506 aa).

It belongs to the aromatic-ring hydroxylase family. KMO subfamily. Requires FAD as cofactor.

Its subcellular location is the mitochondrion outer membrane. It carries out the reaction L-kynurenine + NADPH + O2 + H(+) = 3-hydroxy-L-kynurenine + NADP(+) + H2O. The protein operates within cofactor biosynthesis; NAD(+) biosynthesis; quinolinate from L-kynurenine: step 1/3. In terms of biological role, catalyzes the hydroxylation of L-kynurenine (L-Kyn) to form 3-hydroxy-L-kynurenine (L-3OHKyn). Required for synthesis of quinolinic acid. The sequence is that of Kynurenine 3-monooxygenase (bna4) from Emericella nidulans (strain FGSC A4 / ATCC 38163 / CBS 112.46 / NRRL 194 / M139) (Aspergillus nidulans).